We begin with the raw amino-acid sequence, 167 residues long: IGREAIVGAGLQGPFGGPWPYDALSPFDMPYGPALPAMSCGAGSFGPSSGFAPAAAYGGGLAVTSSSPISPTGLSVTSENTIEGVVAVTGQLPFLGAVVTDGIFPTVGAGDVWYGCGDGAVGIVAETPFASTSVNPAYGYGGAIGGGVPYNSYGPIGYGGCGYNALY.

Positions 1-55 are left arm; the sequence is IGREAIVGAGLQGPFGGPWPYDALSPFDMPYGPALPAMSCGAGSFGPSSGFAPAA. The interval 56–126 is central domain; it reads AYGGGLAVTS…GDGAVGIVAE (71 aa). The segment at 127-167 is right arm; sequence TPFASTSVNPAYGYGGAIGGGVPYNSYGPIGYGGCGYNALY.

The protein belongs to the chorion protein family.

Functionally, this protein is one of many from the eggshell of the silk moth. This Antheraea polyphemus (Polyphemus moth) protein is Chorion class CB protein PC404.